The chain runs to 100 residues: Urease subunit gamma (100 aa).

Belongs to the urease gamma subunit family. Heterotrimer of UreA (gamma), UreB (beta) and UreC (alpha) subunits. Three heterotrimers associate to form the active enzyme.

It is found in the cytoplasm. The catalysed reaction is urea + 2 H2O + H(+) = hydrogencarbonate + 2 NH4(+). It participates in nitrogen metabolism; urea degradation; CO(2) and NH(3) from urea (urease route): step 1/1. This is Urease subunit gamma from Methylobacillus flagellatus (strain ATCC 51484 / DSM 6875 / VKM B-1610 / KT).